A 450-amino-acid polypeptide reads, in one-letter code: Cysteine protease ATG4C (450 aa).

Residue cysteine 112 is the Nucleophile of the active site. Catalysis depends on residues aspartate 336 and histidine 338.

Belongs to the peptidase C54 family.

The protein resides in the cytoplasm. It catalyses the reaction [protein]-C-terminal L-amino acid-glycyl-phosphatidylethanolamide + H2O = [protein]-C-terminal L-amino acid-glycine + a 1,2-diacyl-sn-glycero-3-phosphoethanolamine. Functionally, cysteine protease that plays a key role in autophagy by mediating both proteolytic activation and delipidation of ATG8 family proteins. The protease activity is required for proteolytic activation of ATG8 family proteins: cleaves the C-terminal amino acid of ATG8 proteins to reveal a C-terminal glycine. Exposure of the glycine at the C-terminus is essential for ATG8 proteins conjugation to phosphatidylethanolamine (PE) and insertion to membranes, which is necessary for autophagy. In addition to the protease activity, also mediates delipidation of ATG8 family proteins. Catalyzes delipidation of PE-conjugated forms of ATG8 proteins during macroautophagy. The sequence is that of Cysteine protease ATG4C from Xenopus tropicalis (Western clawed frog).